Here is a 276-residue protein sequence, read N- to C-terminus: NH(3)-dependent NAD(+) synthetase (276 aa).

43 to 50 (GISGGVDS) contacts ATP. Mg(2+) is bound at residue D49. Residue R146 coordinates deamido-NAD(+). T166 serves as a coordination point for ATP. E171 is a binding site for Mg(2+). Deamido-NAD(+) is bound by residues K179 and D186. Positions 195 and 217 each coordinate ATP. 266 to 267 (HK) is a binding site for deamido-NAD(+).

Belongs to the NAD synthetase family. In terms of assembly, homodimer.

It catalyses the reaction deamido-NAD(+) + NH4(+) + ATP = AMP + diphosphate + NAD(+) + H(+). It functions in the pathway cofactor biosynthesis; NAD(+) biosynthesis; NAD(+) from deamido-NAD(+) (ammonia route): step 1/1. Its function is as follows. Catalyzes the ATP-dependent amidation of deamido-NAD to form NAD. Uses ammonia as a nitrogen source. The polypeptide is NH(3)-dependent NAD(+) synthetase (Aliivibrio fischeri (strain ATCC 700601 / ES114) (Vibrio fischeri)).